Reading from the N-terminus, the 570-residue chain is Adenine deaminase (570 aa).

It belongs to the metallo-dependent hydrolases superfamily. Adenine deaminase family. Mn(2+) is required as a cofactor.

It carries out the reaction adenine + H2O + H(+) = hypoxanthine + NH4(+). The chain is Adenine deaminase from Clostridium acetobutylicum (strain ATCC 824 / DSM 792 / JCM 1419 / IAM 19013 / LMG 5710 / NBRC 13948 / NRRL B-527 / VKM B-1787 / 2291 / W).